The following is a 1077-amino-acid chain: Adenylate cyclase type 4 (1077 aa).

Topologically, residues 1 to 28 are cytoplasmic; it reads MARLFSPRPPPSEDLFYETYYSLSQQYP. 6 consecutive transmembrane segments (helical) span residues 29–50, 61–80, 94–117, 120–138, 141–162, and 170–190; these read LLIL…VAWA, FLTT…GLAS, GLIW…VSAW, VSFF…PLGM, AAAA…YLGW, and LLPQ…VGAY. Residues 191–582 are Cytoplasmic-facing; sequence HKALMERALR…YRLSALPAFK (392 aa). 3 residues coordinate Mg(2+): D278, I279, and D322. ATP is bound by residues 278–283, 320–322, and R366; these read DIVGFT and LGD. Residues 503 to 524 are disordered; it reads TSTPLPEKAFSPQWSLDRSRTP. Residue S517 is modified to Phosphoserine. T533 carries the phosphothreonine modification. 3 helical membrane passes run 583–604, 608–630, and 661–684; these read YYAA…LVTT, ALII…CFSE, and VALG…FLPV. Residues 685 to 717 lie on the Extracellular side of the membrane; that stretch reads SSDCLFLASNVSSVTFNASWEMPGSLPLISIPL. 2 N-linked (GlcNAc...) asparagine glycosylation sites follow: N694 and N701. Transmembrane regions (helical) follow at residues 718-738, 746-766, and 793-809; these read ISIP…SLFL, LLLL…SHAW, and MGAI…LVLA. Over 810–1077 the chain is Cytoplasmic; the sequence is RQNEYYCRLD…LTRTGSPSAS (268 aa). ATP-binding positions include K927, 1007-1009, 1014-1018, and K1054; these read DIW and NVASR.

It belongs to the adenylyl cyclase class-4/guanylyl cyclase family. It depends on Mg(2+) as a cofactor. Mn(2+) is required as a cofactor.

It is found in the cell membrane. The protein localises to the cytoplasm. It catalyses the reaction ATP = 3',5'-cyclic AMP + diphosphate. With respect to regulation, activated by forskolin. Insensitive to calcium/calmodulin. Stimulated by GNAS and by the G-protein beta and gamma subunit complex. Catalyzes the formation of the signaling molecule cAMP in response to G-protein signaling. In Mus musculus (Mouse), this protein is Adenylate cyclase type 4 (Adcy4).